The following is a 118-amino-acid chain: Mediator of RNA polymerase II transcription subunit 11 (118 aa).

It belongs to the Mediator complex subunit 11 family. As to quaternary structure, component of the Mediator complex.

The protein resides in the nucleus. Its function is as follows. Component of the Mediator complex, a coactivator involved in the regulated transcription of nearly all RNA polymerase II-dependent genes. Mediator functions as a bridge to convey information from gene-specific regulatory proteins to the basal RNA polymerase II transcription machinery. Mediator is recruited to promoters by direct interactions with regulatory proteins and serves as a scaffold for the assembly of a functional pre-initiation complex with RNA polymerase II and the general transcription factors. This chain is Mediator of RNA polymerase II transcription subunit 11 (med11), found in Xenopus tropicalis (Western clawed frog).